Here is a 554-residue protein sequence, read N- to C-terminus: CTP synthase (554 aa).

The interval 1-265 is amidoligase domain; it reads MTPLIFVTGG…DEIVVNQLKL (265 aa). Residue Ser-13 participates in CTP binding. Ser-13 is a UTP binding site. Residues 14 to 19 and Asp-71 each bind ATP; that span reads SLGKGI. Mg(2+) is bound by residues Asp-71 and Glu-139. CTP contacts are provided by residues 146–148, 186–191, and Lys-222; these read DIE and KTKPTQ. Residues 186 to 191 and Lys-222 contribute to the UTP site; that span reads KTKPTQ. The Glutamine amidotransferase type-1 domain maps to 292-545; the sequence is TIAVVGKYVD…IRAARERKAG (254 aa). Position 353 (Gly-353) interacts with L-glutamine. The active-site Nucleophile; for glutamine hydrolysis is Cys-380. Residues 381 to 384, Glu-404, and Arg-471 contribute to the L-glutamine site; that span reads YGMQ. Catalysis depends on residues His-518 and Glu-520.

This sequence belongs to the CTP synthase family. As to quaternary structure, homotetramer.

The catalysed reaction is UTP + L-glutamine + ATP + H2O = CTP + L-glutamate + ADP + phosphate + 2 H(+). It carries out the reaction L-glutamine + H2O = L-glutamate + NH4(+). It catalyses the reaction UTP + NH4(+) + ATP = CTP + ADP + phosphate + 2 H(+). It functions in the pathway pyrimidine metabolism; CTP biosynthesis via de novo pathway; CTP from UDP: step 2/2. Its activity is regulated as follows. Allosterically activated by GTP, when glutamine is the substrate; GTP has no effect on the reaction when ammonia is the substrate. The allosteric effector GTP functions by stabilizing the protein conformation that binds the tetrahedral intermediate(s) formed during glutamine hydrolysis. Inhibited by the product CTP, via allosteric rather than competitive inhibition. Its function is as follows. Catalyzes the ATP-dependent amination of UTP to CTP with either L-glutamine or ammonia as the source of nitrogen. Regulates intracellular CTP levels through interactions with the four ribonucleotide triphosphates. The sequence is that of CTP synthase from Stenotrophomonas maltophilia (strain R551-3).